A 226-amino-acid chain; its full sequence is 7-cyano-7-deazaguanine synthase (226 aa).

Position 10-20 (10-20 (FSGGQDSTTLA)) interacts with ATP. Zn(2+) contacts are provided by cysteine 190, cysteine 205, cysteine 208, and cysteine 211.

This sequence belongs to the QueC family. Zn(2+) serves as cofactor.

It catalyses the reaction 7-carboxy-7-deazaguanine + NH4(+) + ATP = 7-cyano-7-deazaguanine + ADP + phosphate + H2O + H(+). It functions in the pathway purine metabolism; 7-cyano-7-deazaguanine biosynthesis. Its function is as follows. Catalyzes the ATP-dependent conversion of 7-carboxy-7-deazaguanine (CDG) to 7-cyano-7-deazaguanine (preQ(0)). This chain is 7-cyano-7-deazaguanine synthase, found in Helicobacter pylori (strain Shi470).